Here is a 1410-residue protein sequence, read N- to C-terminus: MKDILKLFKKNKKVEEFDSIKISLASPEVIRSWSFGEVKKPETINYRTLNPERDGLFCARIFGPIKDYECLCGKYKRLKHRGVICEKCGVEVTQSKVRRDRMGHIELAAPIAHIWFLKSLPSRIGLLLDMPLRDIERVLYFESYVITDPGITNLEKYQVLSEDQYIQALEENEDEFEAKMGAEAIQNLLKNMDLKKTCKILKKEVLKVNSETKRKKVTKRIKLIESLLTSKNKPEWMILTVLPILPPDLRPLVPLDGGRFATSDLNDLYRRVINRNNRLKRLLELFAPEIIVRNEKRMLQEAIDALLDNGRRGRSITGSNKRPLKSLADMIKGKQGRFRQNLLGKRVDYSGRSVITVGPYLHLNQCGIPKKMALELFKPFIYGKLEQRNLATTIKSAKKMVEKEEPIVWDILDEVIHKHPILLNRAPTLHRLGIQAFEPILIEGKAIQLHPLVCAAYNADFDGDQMAIHIPLTKTAQKEACSLMMSTKNILSPANGEPIIVPSQDVVLGIYYMTRKKINGKGENMLLSSPKEAEYMYSLGAVDLHSIVKIRILEYKKDEKKNLTEKKKIIKTTIGRAILWIHVPMGLPFKIFNKTLRKSHISEILNTCYRLLGLKKTVRLADQMMYIGFSYAAKSGVSVGINDIIIPKEKEKIIFQAEKEVLEIDKQFQTGLVTSSERYNKVIDIWAIANENIADAMMKNLSYEIIFQKNKKKITQKSFNNIFIMADSGARGSAAQIRQLAGMRGLMAKPDGSIIETPITANFREGLNVLQYFISTHGARKGLADTALKTANSGYLTRRLVDVAQDLVITQTNCKTKKGILMNSLIEGGDIKETLKERVLGRITVENIYHLNSKNIIIPKNTLLNEKWCNILEKNFIDSIIVRSVVHCETSFGVCAYCYGRDLARGKIVKKGEAVGVIAAQSIGEPGTQLTMRTFHIGGAASKVASESSIQIRKNGIIHLNQAKSVINSNGKIVIISRNVELKMLDKTGKTQESYKIPYGSILTKGEGQKVKAGEIIAKWDPHTIPVITEVNGYIKFIDMVDGKSITKQNDELTGLSSIVVLDISERNILGKDLKPALKIIGKNEEDIFIPGTDMPAQYFLPGKSIILLEDGMKISSGDILARVPQESVGTKDITGGLPRVADLFEARKPKELAILAEINGIVSFGKETKGKRRLILTPIDGNNIYEEMIPKWRQLNVFEGERVEKGDIISDGPESPHDILRLRGVQAVTNYIVNEVQEVYRLQGVKINDKHIEVIIRQMLRKATIINPGDSNFLQGEQIEYSKITSENKKLKKNKKETATFSRDLLGITKASLATESFISAASFQETTRVLTEAAVAGKKDKLRGLKENVIVGRLIPAGTGYKYHKKRLKNRIKNSVNKKNNMSSISVEEAAANLSELLNSTENINNRI.

Cysteine 70, cysteine 72, cysteine 85, and cysteine 88 together coordinate Zn(2+). Mg(2+)-binding residues include aspartate 460, aspartate 462, and aspartate 464. Zn(2+) contacts are provided by cysteine 814, cysteine 888, cysteine 895, and cysteine 898.

This sequence belongs to the RNA polymerase beta' chain family. In terms of assembly, the RNAP catalytic core consists of 2 alpha, 1 beta, 1 beta' and 1 omega subunit. When a sigma factor is associated with the core the holoenzyme is formed, which can initiate transcription. Requires Mg(2+) as cofactor. Zn(2+) serves as cofactor.

It carries out the reaction RNA(n) + a ribonucleoside 5'-triphosphate = RNA(n+1) + diphosphate. Its function is as follows. DNA-dependent RNA polymerase catalyzes the transcription of DNA into RNA using the four ribonucleoside triphosphates as substrates. The chain is DNA-directed RNA polymerase subunit beta' from Buchnera aphidicola subsp. Cinara cedri (strain Cc).